A 337-amino-acid polypeptide reads, in one-letter code: Glyceraldehyde-3-phosphate dehydrogenase 1 (337 aa).

NAD(+) is bound by residues 12–13 (RI), D34, and M79. D-glyceraldehyde 3-phosphate-binding positions include 151–153 (SCT), T182, 211–212 (TG), and R234. Catalysis depends on C152, which acts as the Nucleophile. Residue N316 coordinates NAD(+).

It belongs to the glyceraldehyde-3-phosphate dehydrogenase family. As to quaternary structure, homotetramer.

Its subcellular location is the cytoplasm. The catalysed reaction is D-glyceraldehyde 3-phosphate + phosphate + NAD(+) = (2R)-3-phospho-glyceroyl phosphate + NADH + H(+). It functions in the pathway carbohydrate degradation; glycolysis; pyruvate from D-glyceraldehyde 3-phosphate: step 1/5. The sequence is that of Glyceraldehyde-3-phosphate dehydrogenase 1 (GAP1) from Giardia intestinalis (Giardia lamblia).